Consider the following 137-residue polypeptide: Large ribosomal subunit protein uL16 (137 aa).

The protein belongs to the universal ribosomal protein uL16 family. Part of the 50S ribosomal subunit.

In terms of biological role, binds 23S rRNA and is also seen to make contacts with the A and possibly P site tRNAs. This is Large ribosomal subunit protein uL16 from Cellvibrio japonicus (strain Ueda107) (Pseudomonas fluorescens subsp. cellulosa).